Reading from the N-terminus, the 543-residue chain is Kelch repeat and BTB domain-containing protein 4 (543 aa).

Residues 70-137 (ADVTISVEGR…IYHGTVKLRA (68 aa)) form the BTB domain. The BACK domain occupies 172–264 (CLQVMWLADR…SLKEIGENVH (93 aa)). 5 Kelch repeats span residues 264–310 (HIYL…KHGG), 311–353 (DLYV…SVPG), 356–403 (AIYS…NLNG), 405–455 (IYLL…VHKD), and 457–505 (VFIV…YVFR).

As to quaternary structure, component of the BCR(KBTBD4) E3 ubiquitin ligase complex, at least composed of CUL3, KBTBD4 and RBX1.

In terms of biological role, substrate-specific adapter of a BCR (BTB-CUL3-RBX1) E3 ubiquitin ligase complex which targets CoREST corepressor complex components RCOR1, KDM1A/LSD1 and HDAC2 for proteasomal degradation. RCOR1 is likely to be the primary target while degradation of KDM1A and HDAC2 is likely due to their association with RCOR1. Also targets RCOR3, MIER2 and MIER3 for proteasomal degradation as well as associated proteins ZNF217 and RREB1. Degradation is dependent on the presence of an ELM2 domain in the target proteins. This chain is Kelch repeat and BTB domain-containing protein 4 (KBTBD4), found in Macaca fascicularis (Crab-eating macaque).